Consider the following 171-residue polypeptide: uncharacterized protein (171 aa).

An N-terminal signal peptide occupies residues 1-20 (MRRVLFSCFCGLLWSSSGWA). Cysteines 40 and 80 form a disulfide.

Belongs to the fimbrial protein family.

The protein localises to the fimbrium. In terms of biological role, part of the sfmACDHF fimbrial operon. Could contribute to adhesion to various surfaces in specific environmental niches. Increases adhesion to eukaryotic T24 bladder epithelial cells in the absence of fim genes. This is an uncharacterized protein from Escherichia coli (strain K12).